The chain runs to 253 residues: MKFNIVSPVALSCLFFLFLTGTLAQNAGSIVTRELFEQMLSFRNNDACPAKGFYTYDAFIAAANSFPGFGTTGDDTARKKEIAAFFGQTSHETKGGSAGTFTGGYCFVRQIDQSDRYYGRGPIQLTHQSNYERAGQGIGVGQDLVNNPDLVATDPIISFRTAIWFWMTAQDNKPSCHNVIIGQWTPSPADTAANRVPGYGVITNIINGGLECNMGPNTAVESRIGFYRRYCGMLNVPTGENLDCNNQKNFAQG.

The N-terminal stretch at 1 to 24 (MKFNIVSPVALSCLFFLFLTGTLA) is a signal peptide. The active-site Proton donor is the Glu92. The cysteines at positions 212 and 244 are disulfide-linked.

It belongs to the glycosyl hydrolase 19 family. Chitinase class II subfamily.

The protein resides in the secreted. Its subcellular location is the extracellular space. It carries out the reaction Random endo-hydrolysis of N-acetyl-beta-D-glucosaminide (1-&gt;4)-beta-linkages in chitin and chitodextrins.. Defense against chitin-containing fungal pathogens. In Solanum chilense (Tomato), this protein is Acidic endochitinase pcht28.